The sequence spans 383 residues: TOM1-like protein 2 (383 aa).

The region spanning 45-178 (ATLETLEEPN…GLHARGEENS (134 aa)) is the VHS domain. A GAT domain is found at 223 to 310 (LSIKDKKEQI…VLSSYKKPDE (88 aa)). Positions 305-383 (YKKPDETEKK…LGLSSDEDEK (79 aa)) are disordered. Composition is skewed to basic and acidic residues over residues 306–316 (KKPDETEKKAS) and 339–354 (EPVKKTGADDDKKHSE). 2 positions are modified to phosphoserine: serine 377 and serine 378.

This sequence belongs to the TOM1 family. As to expression, ubiquitously expressed.

It is found in the cytoplasm. Its subcellular location is the membrane. Its function is as follows. Binds ubiquitin in vitro. Might contribute to the loading of the ESCRT machinery. This Arabidopsis thaliana (Mouse-ear cress) protein is TOM1-like protein 2.